The primary structure comprises 266 residues: Tryptophan synthase alpha chain (266 aa).

Active-site proton acceptor residues include Glu-51 and Asp-62.

This sequence belongs to the TrpA family. As to quaternary structure, tetramer of two alpha and two beta chains.

It catalyses the reaction (1S,2R)-1-C-(indol-3-yl)glycerol 3-phosphate + L-serine = D-glyceraldehyde 3-phosphate + L-tryptophan + H2O. Its pathway is amino-acid biosynthesis; L-tryptophan biosynthesis; L-tryptophan from chorismate: step 5/5. In terms of biological role, the alpha subunit is responsible for the aldol cleavage of indoleglycerol phosphate to indole and glyceraldehyde 3-phosphate. This chain is Tryptophan synthase alpha chain, found in Prochlorococcus marinus (strain NATL1A).